The sequence spans 660 residues: Glycine betaine transporter (660 aa).

At 1 to 13 the chain is on the cytoplasmic side; sequence MPSKTSSRFANIN. A helical membrane pass occupies residues 14–34; the sequence is PNVFVSTIMIIAIFLAIVILA. Residues 35–52 are Periplasmic-facing; it reads PDAFELLTQQLKNWITES. The chain crosses the membrane as a helical span at residues 53–73; that stretch reads FSWFYVLSVAFFLIVLGYIAC. Residues 74–93 lie on the Cytoplasmic side of the membrane; that stretch reads SSSGKIKLGPDHSQPDYSNS. Residues 94-114 traverse the membrane as a helical segment; the sequence is SWFAMLFTAGMGIGLMFFGIA. The Periplasmic portion of the chain corresponds to 115–139; it reads EPIMHYVSPPSGEPETILAAQQSMR. Residues 140–160 traverse the membrane as a helical segment; that stretch reads VTFFHWGLHAWGIYAIVALSL. Residues 161 to 195 are Cytoplasmic-facing; sequence SYFAYRHDLPLKIRSSLYPLIGKKIYGPMGDAVDT. The chain crosses the membrane as a helical span at residues 196–216; sequence FATIGTIFGVATTLGFGVTQI. Residues 217 to 230 lie on the Periplasmic side of the membrane; the sequence is SSGLNYLFGFEPTS. A helical transmembrane segment spans residues 231-251; it reads FSKVVLIIIVSAMAALSVGLG. At 252–263 the chain is on the cytoplasmic side; that stretch reads LDKGVKRLAELN. Residues 264–284 traverse the membrane as a helical segment; that stretch reads LVLAVTLLAFVFFTSATVYLL. Over 285–316 the chain is Periplasmic; the sequence is QTTIQNTGQYISNLFEMTFNLYAYQPNGWIGG. Residues 317–337 form a helical membrane-spanning segment; sequence WTIMYWAWWISWSPFVGMFIA. The Cytoplasmic segment spans residues 338–347; it reads RVSRGRTIRE. The chain crosses the membrane as a helical span at residues 348 to 368; it reads FIIGVMLIPTGFTLIWMGFMG. The Periplasmic segment spans residues 369-401; the sequence is NAGLYSILHDGNLSLLNAVQRDSSVALFEFLHS. A helical transmembrane segment spans residues 402 to 422; it reads LPFSGVMSLLATVLVVLFFVT. At 423–446 the chain is on the cytoplasmic side; sequence SADSGALVVDYLTAKSEDSPVWQR. A helical membrane pass occupies residues 447 to 467; sequence LFWIVVMAGLAIILLLAGGLT. The Periplasmic segment spans residues 468-471; the sequence is ALQS. Residues 472-492 traverse the membrane as a helical segment; the sequence is ATIMSALPFTFIMLLICWGLI. The Cytoplasmic segment spans residues 493-660; the sequence is KALRIDSTKM…LSVMRAQTGN (168 aa).

The protein belongs to the BCCT transporter (TC 2.A.15) family.

The protein resides in the cell inner membrane. Uptake is activated by NaCl, KCl or mannose gradients across the cell membrane. Inhibited by the protonophore 3,3',4',5-tetrachlorosalicylanilide (TCS). Its function is as follows. Energy-dependent uptake of glycine betaine in response to high salinity. The polypeptide is Glycine betaine transporter (Acinetobacter baylyi (strain ATCC 33305 / BD413 / ADP1)).